Reading from the N-terminus, the 379-residue chain is Cyclic dinucleotide synthase CdnE (379 aa).

4 residues coordinate UTP: Q107, S109, D123, and K179. Residue D123 participates in Mg(2+) binding. D193 contributes to the Mg(2+) binding site. N229, K257, and S274 together coordinate UTP. The Pyrimidine specificity motif (R/Q)xW in donor pocket motif lies at 328–330; that stretch reads KIF.

Belongs to the CD-NTase family. E02 subfamily. Requires Mg(2+) as cofactor.

It catalyses the reaction 2 UTP = c-di-UMP + 2 diphosphate. It carries out the reaction UTP + ATP = 3',3'-cUAMP + 2 diphosphate. The enzyme catalyses UTP + CTP = cyclic CMP-UMP + 2 diphosphate. Cyclic nucleotide synthase (second messenger synthase) of a CBASS antivirus system. CBASS (cyclic oligonucleotide-based antiphage signaling system) provides immunity against bacteriophage. The CD-NTase protein synthesizes cyclic nucleotides in response to infection; these serve as specific second messenger signals. The signals activate a diverse range of effectors, leading to bacterial cell death and thus abortive phage infection. The effector protein for this system is membrane protein Cap15. A type I-B(UU) CBASS system. Its function is as follows. Cyclic dinucleotide synthase that preferentially catalyzes the synthesis of 3',3'-cyclic UMP-UMP (c-di-UMP) and 3',3'-cyclic UMP-AMP, with minor amounts of 3',3'-cyclic UMP-CMP, which are second messengers for cell signal transduction. In terms of biological role, protects E.coli against phage infection. When the CBASS operon (cap15-cdnE) is introduced in E.coli MG1655 it protects against phages T2, T4, T5, T6, SECPhi4, SECPhi6, SECPhi17, SECPhi18 and SECPhi27, but not against phage T7. The polypeptide is Cyclic dinucleotide synthase CdnE (Yersinia aleksiciae).